The chain runs to 938 residues: MLKALLGDPNARKIKKFQPLVTEINLLEEDIKNLSDEELRSKTSEFKERLDKARNYDEREEILEEILPEAFAIVREAGIRVLGMRHFDVQLLGGMVLHKGQIAEMKTGEGKTLVATLPAYLNGLTGKGVHVVTVNDYLARRDAEWMGQVHRFLGLSVGLIQAGMSPEERKKNYACDITYTTNSELGFDYLRDNMATVMGEVVQRPFNYCVIDEVDSILIDEARTPLIISGPIDRPTEKYILAAEIAKQLVRQKVEDGPGDYEVNEKDRNVLMTDEGFKRAEELLGVTDLYDQENPWAHYISNAIRAKELQKKDVNYIVRSGEIVIVDEFTGRVLPGRRWGDGLHQAVEAKEGVEIQQETQTLATITYQNFFLLYPKLSGMTGTAKTEETELEKVYNLQVTIIPTNRVSRRQDLADVVYKNEQAKWNAVAEECQQMHEQGRPVLVGTTSVEKSEVLSLLLQGRNIPHNLLNARPENVERESEIVAQAGRAGAVTIATNMAGRGTDIILGGNSDYMARLKIREYLMPKLVMPEDDNLAFSLPSLGERNRPQGFAPGKKKKNWRASAEIFPTELPKEVENALKEAVKFAVDTHGTQSLPELEVEEKIAIAAEKAPTDDPVIQKLREVYKLIRKSYEDYTGKEHDEVVERGGLHVIGTERHESRRIDNQLRGRAGRQGDPGSTHFFLSLEDNLLRIFGGDRVAGLMDAFRVEEDMPIESGMLTRSLEGAQRKVETFYYDARKQVFEYDEVMNNQRRAIYAERRRVLEGMDLKEQVLQYAEKTMDEIVMAYVNPELPAEEWDLEKLISKSQEFVYLLADITAKDVEEMSVNDIKMFLHEEVRKAYEIKERQVDSIRAGLMRDAERYFILQQIDMLWREHLQAMEALRESIGLRGYGQKDPLIEYKQEGYEMFLEMMIDIRRNVVYSLFQFQPQGQPQAVASEQ.

ATP-binding positions include Q90, 108-112, and D504; that span reads GEGKT.

It belongs to the SecA family. As to quaternary structure, monomer and homodimer. Part of the essential Sec protein translocation apparatus which comprises SecA, SecYEG and auxiliary proteins SecDF. Other proteins may also be involved.

The protein resides in the cell inner membrane. It is found in the cellular thylakoid membrane. Its subcellular location is the cytoplasm. It catalyses the reaction ATP + H2O + cellular proteinSide 1 = ADP + phosphate + cellular proteinSide 2.. In terms of biological role, part of the Sec protein translocase complex. Interacts with the SecYEG preprotein conducting channel. Has a central role in coupling the hydrolysis of ATP to the transfer of proteins into and across the cell membrane, serving as an ATP-driven molecular motor driving the stepwise translocation of polypeptide chains across the membrane. Functionally, probably participates in protein translocation into and across both the cytoplasmic and thylakoid membranes in cyanobacterial cells. The chain is Protein translocase subunit SecA from Microcystis aeruginosa (strain NIES-843 / IAM M-2473).